The chain runs to 380 residues: Flap endonuclease 1 (380 aa).

The segment at 1-104 (MGIQGLAKLI…GELAKRSERR (104 aa)) is N-domain. Arg-19 carries the post-translational modification Symmetric dimethylarginine; by PRMT5. Asp-34 contributes to the Mg(2+) binding site. Residues Arg-47 and Arg-70 each contribute to the DNA site. Position 80 is an N6-acetyllysine (Lys-80). Residue Asp-86 participates in Mg(2+) binding. Residues Arg-100 and Arg-104 each carry the symmetric dimethylarginine; by PRMT5 modification. Residues 122–253 (EVEKFTKRLV…KRAVDLIQKH (132 aa)) are I-domain. The Mg(2+) site is built by Glu-158, Glu-160, Asp-179, and Asp-181. DNA is bound at residue Glu-158. Ser-187 is modified (phosphoserine; by CDK2). Arg-192 bears the Symmetric dimethylarginine; by PRMT5 mark. The residue at position 197 (Ser-197) is a Phosphoserine. 2 residues coordinate DNA: Gly-231 and Asp-233. Asp-233 contributes to the Mg(2+) binding site. 3 positions are modified to phosphoserine: Ser-255, Ser-293, and Ser-335. The tract at residues 327-380 (RLSKSRQGSTQGRLDDFFKVTGSLSSAKRKEPEPKGSTKKKAKTGAAGKFKRGK) is disordered. At Thr-336 the chain carries Phosphothreonine. Positions 336-344 (TQGRLDDFF) are interaction with PCNA. An N6-acetyllysine modification is found at Lys-354. The span at 363–380 (STKKKAKTGAAGKFKRGK) shows a compositional bias: basic residues. Residue Thr-364 is modified to Phosphothreonine. Lys-375, Lys-377, and Lys-380 each carry N6-acetyllysine.

This sequence belongs to the XPG/RAD2 endonuclease family. FEN1 subfamily. Interacts with PCNA. Three molecules of FEN1 bind to one PCNA trimer with each molecule binding to one PCNA monomer. PCNA stimulates the nuclease activity without altering cleavage specificity. The C-terminal domain binds EP300; can bind simultaneously to both PCNA and EP300. Interacts with DDX11; this interaction is direct and increases flap endonuclease activity of FEN1. Interacts with WDR4; regulating its endonuclease activity. Interacts with POLB. Mg(2+) serves as cofactor. Post-translationally, acetylated by EP300. Acetylation inhibits both endonuclease and exonuclease activity. Acetylation also reduces DNA-binding activity but does not affect interaction with PCNA or EP300. Phosphorylation upon DNA damage induces relocalization to the nuclear plasma. Phosphorylation at Ser-187 by CDK2 occurs during late S-phase and results in dissociation from PCNA. In terms of processing, methylation at Arg-192 by PRMT5 impedes Ser-187 phosphorylation and increases interaction with PCNA.

Its subcellular location is the nucleus. It is found in the nucleolus. It localises to the nucleoplasm. The protein localises to the mitochondrion. In terms of biological role, structure-specific nuclease with 5'-flap endonuclease and 5'-3' exonuclease activities involved in DNA replication and repair. During DNA replication, cleaves the 5'-overhanging flap structure that is generated by displacement synthesis when DNA polymerase encounters the 5'-end of a downstream Okazaki fragment. It enters the flap from the 5'-end and then tracks to cleave the flap base, leaving a nick for ligation. Also involved in the long patch base excision repair (LP-BER) pathway, by cleaving within the apurinic/apyrimidinic (AP) site-terminated flap. Acts as a genome stabilization factor that prevents flaps from equilibrating into structures that lead to duplications and deletions. Also possesses 5'-3' exonuclease activity on nicked or gapped double-stranded DNA, and exhibits RNase H activity. Also involved in replication and repair of rDNA and in repairing mitochondrial DNA. In Homo sapiens (Human), this protein is Flap endonuclease 1.